A 227-amino-acid polypeptide reads, in one-letter code: Response regulator protein TodT (227 aa).

The 115-residue stretch at 28–142 (VIYILDDDNA…ELLGAIRAAL (115 aa)) folds into the Response regulatory domain. Asp77 carries the 4-aspartylphosphate modification. The HTH luxR-type domain maps to 158-223 (LKENYESLSK…DLVRVTERLK (66 aa)). The segment at residues 182-201 (NKQTALELDISEATVKVHRH) is a DNA-binding region (H-T-H motif).

In terms of processing, phosphorylated by TodS.

Its subcellular location is the cytoplasm. Member of the two-component regulatory system TodS/TodT involved in the regulation of toluene degradation. Phosphorylated TodT activates transcription of the tod operon (todXFC1C2BADEGIH). Binds specifically to a 6-bp palindromic DNA structure in the tod promoter region. The polypeptide is Response regulator protein TodT (todT) (Pseudomonas putida (strain ATCC 700007 / DSM 6899 / JCM 31910 / BCRC 17059 / LMG 24140 / F1)).